Reading from the N-terminus, the 419-residue chain is Potassium/proton antiporter CemA (419 aa).

A run of 4 helical transmembrane segments spans residues 196–216 (LASI…TLLF), 297–317 (IIEL…LCIA), 344–364 (ILLI…EVLI), and 371–391 (FGFV…PVVL).

This sequence belongs to the CemA family.

It localises to the plastid. Its subcellular location is the chloroplast inner membrane. It catalyses the reaction K(+)(in) + H(+)(out) = K(+)(out) + H(+)(in). In terms of biological role, contributes to K(+)/H(+) antiport activity by supporting proton efflux to control proton extrusion and homeostasis in chloroplasts in a light-dependent manner to modulate photosynthesis. Prevents excessive induction of non-photochemical quenching (NPQ) under continuous-light conditions. Indirectly promotes efficient inorganic carbon uptake into chloroplasts. The sequence is that of Potassium/proton antiporter CemA from Chara vulgaris (Common stonewort).